Here is a 470-residue protein sequence, read N- to C-terminus: Growth/differentiation factor 6 (470 aa).

Residues 1 to 22 (MDTSRVLLSAVFLISFLWDLPG) form the signal peptide. Positions 23–350 (FQQASISSSS…SPSPGRRRRR (328 aa)) are excised as a propeptide. The interval 28 to 98 (ISSSSSSAEL…REPPGRGPRV (71 aa)) is disordered. Residues 45-80 (SRKEGRMPRAPRENATAREPLDRQEPPPRPQEEPQR) are compositionally biased toward basic and acidic residues. An N-linked (GlcNAc...) asparagine glycan is attached at Asn-120. Disordered regions lie at residues 247–272 (PGAA…SLGF) and 308–366 (TEVV…KKSR). Positions 321 to 333 (GPPPPPPPPPPSG) are enriched in pro residues. Basic residues predominate over residues 345–366 (GRRRRRTAFASRHGKRHGKKSR). Disulfide bonds link Cys-369–Cys-435, Cys-398–Cys-467, and Cys-402–Cys-469.

The protein belongs to the TGF-beta family. Homodimer; disulfide-linked.

Its subcellular location is the secreted. Growth factor that controls proliferation and cellular differentiation in the retina and bone formation. Plays a key role in regulating apoptosis during retinal development. Establishes dorsal-ventral positional information in the retina and controls the formation of the retinotectal map. Required for normal formation of bones and joints in the limbs, skull, digits and axial skeleton. Plays a key role in establishing boundaries between skeletal elements during development. Regulation of GDF6 expression seems to be a mechanism for evolving species-specific changes in skeletal structures. Seems to positively regulate differentiation of chondrogenic tissue through the growth factor receptors subunits BMPR1A, BMPR1B, BMPR2 and ACVR2A, leading to the activation of SMAD1-SMAD5-SMAD8 complex. The regulation of chondrogenic differentiation is inhibited by NOG. Also involved in the induction of adipogenesis from mesenchymal stem cells. This mechanism acts through the growth factor receptors subunits BMPR1A, BMPR2 and ACVR2A and the activation of SMAD1-SMAD5-SMAD8 complex and MAPK14/p38. The sequence is that of Growth/differentiation factor 6 (GDF6) from Bos taurus (Bovine).